The primary structure comprises 463 residues: Gamma-aminobutyric acid receptor subunit alpha-5 (463 aa).

An N-terminal signal peptide occupies residues 1 to 25 (MDNGMLSRFIMTQTLLVFCISMTLS). Topologically, residues 26-260 (SHFGFSQMPT…FHLKRKIGYF (235 aa)) are extracellular. Asparagine 45 carries N-linked (GlcNAc...) asparagine glycosylation. Arginine 101 is a 4-aminobutanoate binding site. Asparagine 145 carries N-linked (GlcNAc...) asparagine glycosylation. Position 164 (threonine 164) interacts with 4-aminobutanoate. An intrachain disulfide couples cysteine 173 to cysteine 187. N-linked (GlcNAc...) asparagine glycans are attached at residues asparagine 207 and asparagine 236. The next 3 helical transmembrane spans lie at 261-281 (VIQTYLPCIMTVILSQVSFWL), 287-308 (PARTVFGVTTVLTMTTLSISAR), and 319-340 (AMDWFIAVCYAFVFSALIEFAT). The Cytoplasmic portion of the chain corresponds to 341 to 428 (VNYFTKRGWA…TYNSISKIDK (88 aa)). Residue lysine 355 forms a Glycyl lysine isopeptide (Lys-Gly) (interchain with G-Cter in ubiquitin) linkage. Residues 387–408 (PNIPKEQPPAGTANAPTVSIKA) are disordered. Residues 429–449 (MSRIVFPILFGTFNLVYWATY) form a helical membrane-spanning segment.

It belongs to the ligand-gated ion channel (TC 1.A.9) family. Gamma-aminobutyric acid receptor (TC 1.A.9.5) subfamily. GABRA5 sub-subfamily. As to quaternary structure, heteropentamer, formed by a combination of alpha (GABRA1-6), beta (GABRB1-3), gamma (GABRG1-3), delta (GABRD), epsilon (GABRE), rho (GABRR1-3), pi (GABRP) and theta (GABRQ) chains, each subunit exhibiting distinct physiological and pharmacological properties. Expressed in brain, in hippocampal pyramidal neurons.

The protein localises to the postsynaptic cell membrane. The protein resides in the cell membrane. It carries out the reaction chloride(in) = chloride(out). Alpha subunit of the heteropentameric ligand-gated chloride channel gated by gamma-aminobutyric acid (GABA), a major inhibitory neurotransmitter in the brain. GABA-gated chloride channels, also named GABA(A) receptors (GABAAR), consist of five subunits arranged around a central pore and contain GABA active binding site(s) located at the alpha and beta subunit interface(s). When activated by GABA, GABAARs selectively allow the flow of chloride anions across the cell membrane down their electrochemical gradient. GABAARs containing alpha-5/GABRA5 are mainly extrasynaptic and contribute to the tonic GABAergic inhibition of the hippocampus. Extrasynaptic alpha-5-containing GABAARs in CA1 pyramidal neurons play a role in learning and memory processes. This is Gamma-aminobutyric acid receptor subunit alpha-5 from Mus musculus (Mouse).